The primary structure comprises 33 residues: uncharacterized protein (33 aa).

The protein resides in the cytoplasm. It localises to the nucleus. This is an uncharacterized protein from Schizosaccharomyces pombe (strain 972 / ATCC 24843) (Fission yeast).